The following is a 79-amino-acid chain: Acyl carrier protein (79 aa).

In terms of domain architecture, Carrier spans 2–77 (ADFEARVKEI…SAIDYVKTHV (76 aa)). An O-(pantetheine 4'-phosphoryl)serine modification is found at S37.

Belongs to the acyl carrier protein (ACP) family. In terms of processing, 4'-phosphopantetheine is transferred from CoA to a specific serine of apo-ACP by AcpS. This modification is essential for activity because fatty acids are bound in thioester linkage to the sulfhydryl of the prosthetic group.

It localises to the cytoplasm. It participates in lipid metabolism; fatty acid biosynthesis. In terms of biological role, carrier of the growing fatty acid chain in fatty acid biosynthesis. The polypeptide is Acyl carrier protein (Endomicrobium trichonymphae).